Consider the following 210-residue polypeptide: Urease accessory protein UreF (210 aa).

This sequence belongs to the UreF family. In terms of assembly, ureD, UreF and UreG form a complex that acts as a GTP-hydrolysis-dependent molecular chaperone, activating the urease apoprotein by helping to assemble the nickel containing metallocenter of UreC. The UreE protein probably delivers the nickel.

Its subcellular location is the cytoplasm. Its function is as follows. Required for maturation of urease via the functional incorporation of the urease nickel metallocenter. This chain is Urease accessory protein UreF, found in Cereibacter sphaeroides (strain KD131 / KCTC 12085) (Rhodobacter sphaeroides).